We begin with the raw amino-acid sequence, 1589 residues long: Polyhomeotic-proximal chromatin protein (1589 aa).

Over residues 1 to 15 (MDRRALKFMQKRADT) the composition is skewed to basic and acidic residues. Disordered stretches follow at residues 1–85 (MDRR…GGKQ), 107–174 (KYDV…NCNS), 252–290 (LQQQLSEANGGGAASAGAGGAASPANSQQSQQQQHSTAI), 1112–1244 (LSTA…STTT), and 1260–1294 (AVSTASTTTTSSGTFITSCTSTTTTTTSSISNGSK). Composition is skewed to low complexity over residues 18-28 (DTTTPVSTTAS), 60-80 (NHNNNNSSQHSHSHQQQQQQQ), and 119-139 (AQQQATSGTGPATGSGSVTPT). Residues 154-174 (HTPSTPNRPSAPSTPNTNCNS) show a composition bias toward polar residues. Positions 260–271 (NGGGAASAGAGG) are enriched in gly residues. Residues 272–285 (AASPANSQQSQQQQ) are compositionally biased toward low complexity. Ser1145 bears the Phosphoserine mark. Thr1148 is subject to Phosphothreonine. Residues 1157–1180 (TTPKSSTPATVSASVEASSSTGEA) are compositionally biased toward low complexity. Residues 1189–1221 (RSSTPSKGATTPTSKQSNAAVQPPSSTTPNSVS) show a composition bias toward polar residues. Low complexity-rich tracts occupy residues 1230-1244 (TCGSLTSATSTSTTT) and 1260-1290 (AVSTASTTTTSSGTFITSCTSTTTTTTSSIS). The FCS-type zinc finger occupies 1356–1389 (SAPGSDMVACEQCGKMEHKAKLKRKRYCSPGCSR). Zn(2+) contacts are provided by Cys1365, Cys1368, Cys1383, and Cys1387. Residues 1513 to 1577 (WSVDDVSNFI…VAKVESIKEV (65 aa)) enclose the SAM domain.

Component of PRC1 complex, which contains many PcG proteins like Pc, ph, Scm, Psc, Sce and also chromatin-remodeling proteins such as histone deacetylases. This complex is distinct from the Esc/E(z) complex, at least composed of esc, E(z), Su(z)12, HDAC1/Rpd3 and Caf1-55. The 2 complexes however cooperate and interact together during the first 3 hours of development to establish PcG silencing. Interacts with the SAM domain of Scm via its SAM domain in vitro. Interacts with Trl in vivo and with corto in vitro. Salivary glands.

Its subcellular location is the nucleus. Its function is as follows. Polycomb group (PcG) protein. PcG proteins act by forming multiprotein complexes, which are required to maintain the transcriptionally repressive state of homeotic genes throughout development. PcG proteins are not required to initiate repression, but to maintain it during later stages of development. Component of the PcG multiprotein PRC1 complex, a complex that acts via chromatin remodeling and modification of histones; it mediates monoubiquitination of histone H2A 'Lys-118', rendering chromatin heritably changed in its expressibility. Plays a role in regulating the expression of other pair-rule genes such as eve, ftz, and H. The sequence is that of Polyhomeotic-proximal chromatin protein (ph-p) from Drosophila melanogaster (Fruit fly).